The following is a 1140-amino-acid chain: Protein shank (1140 aa).

ANK repeat units lie at residues 144–174, 178–207, 211–242, 246–275, 279–309, and 312–341; these read QGET…HVDF, EGQT…SPNY, IGLT…DIGV, HGNH…QIDA, NGNS…HLAV, and QGQT…KSSV. The interval 337 to 412 is disordered; the sequence is PKSSVPYRGT…ITPSEYGTMR (76 aa). Residues 351–364 show a composition bias toward basic residues; that stretch reads TRRRLSSTITRRRS. The span at 388–412 shows a compositional bias: low complexity; it reads SAAPSPSPSRSSRTTITPSEYGTMR. The PDZ domain occupies 436 to 529; the sequence is ILVIPRGVKG…TITLKVITVD (94 aa). 2 stretches are compositionally biased toward polar residues: residues 640 to 657 and 687 to 704; these read DQES…NSVS and TSTF…QLSR. 5 disordered regions span residues 640–673, 687–856, 875–902, 961–993, and 1008–1028; these read DQES…ASSA, TSTF…AASA, QLKK…STTD, KDSG…HSPN, and YGQK…SSTV. 2 stretches are compositionally biased toward low complexity: residues 761 to 775 and 784 to 793; these read QHQN…QQHP and PQPIQQQQSS. Pro residues-rich tracts occupy residues 794–806 and 823–847; these read IPPP…PPHC and VPPP…PPPG. Polar residues predominate over residues 964 to 974; the sequence is GYTSSRTSLEP. Over residues 977 to 988 the composition is skewed to basic and acidic residues; it reads SEEKDHRPHFSL. Residues 1015-1028 are compositionally biased toward low complexity; sequence SVASSSTASSSSTV. In terms of domain architecture, SAM spans 1078–1140; sequence WSVDDVIGWL…IESALRGLLQ (63 aa).

This sequence belongs to the SHANK family. As to quaternary structure, interacts (via PDZ domain) with egl-19 (via C-terminus). Expressed in the pharynx, pharyngeal-intestinal valve, intestine, rectal epithelial cells, tail neurons, nerve cord and sperm.

The protein resides in the cell projection. It is found in the pseudopodium. Its subcellular location is the cytoplasmic vesicle. It localises to the postsynaptic density. In terms of biological role, scaffold protein that most likely acts in the postsynaptic density (PSD) of excitatory synapses which orchestrates synapse formation and maintenance at neuromuscular junctions. Associates with and trafficks the L-type calcium channel egl-19 to the cell surface of body wall muscles to ensure the function of the calcium channel and therefore maintain the Ca(2+) current density. The maintenance of Ca(2+) also allows for the downstream regulation of Ca(2+)-induced expression of genes such as gem-4. Plays a role in the regulation of the defecation cycle, and this may be in association with the inositol trisphosphate (IP3) receptor itr-1, which in turn mediates periodic calcium release and muscle contractions. Required for normal fertility and pharyngeal pumping. In Caenorhabditis elegans, this protein is Protein shank.